The chain runs to 349 residues: Hyaluronidase Tab y 2.0101 (349 aa).

An N-terminal signal peptide occupies residues 1–25 (MKLHQGLVCLSVLILLPTCILGDRK). 2 disulfide bridges follow: Cys-37/Cys-328 and Cys-205/Cys-216. N-linked (GlcNAc...) asparagine glycans are attached at residues Asn-41, Asn-81, Asn-99, and Asn-119. The active-site Proton donor is the Glu-129. The N-linked (GlcNAc...) asparagine glycan is linked to Asn-147. N-linked (GlcNAc...) asparagine glycans are attached at residues Asn-251 and Asn-297.

The protein belongs to the glycosyl hydrolase 56 family. In terms of tissue distribution, expressed in salivary glands.

The protein resides in the secreted. The catalysed reaction is Random hydrolysis of (1-&gt;4)-linkages between N-acetyl-beta-D-glucosamine and D-glucuronate residues in hyaluronate.. Its function is as follows. Hydrolyzes high molecular weight hyaluronic acid to produce small oligosaccharides. In Tabanus yao (Horsefly), this protein is Hyaluronidase Tab y 2.0101.